The following is a 270-amino-acid chain: Phosphate import ATP-binding protein PstB 1 (270 aa).

In terms of domain architecture, ABC transporter spans 24–265; it reads LAVERLNLFY…PYQRQTEDYI (242 aa). 56 to 63 is an ATP binding site; sequence GPSGCGKS.

It belongs to the ABC transporter superfamily. Phosphate importer (TC 3.A.1.7) family. As to quaternary structure, the complex is composed of two ATP-binding proteins (PstB), two transmembrane proteins (PstC and PstA) and a solute-binding protein (PstS).

The protein resides in the cell inner membrane. It carries out the reaction phosphate(out) + ATP + H2O = ADP + 2 phosphate(in) + H(+). Its function is as follows. Part of the ABC transporter complex PstSACB involved in phosphate import. Responsible for energy coupling to the transport system. This is Phosphate import ATP-binding protein PstB 1 from Yersinia pestis bv. Antiqua (strain Antiqua).